Here is a 259-residue protein sequence, read N- to C-terminus: MAARRALKAVLVDLNGTLHIEDAAVPGAQEALKRLRATSVMVRFVTNTTKESKKDLLERLKKLEFEISEDEIFTSLTAARNLIEQKQVRPMLLVDDRALPEFTGVQTQDPNAVVIGLAPEHFHYQLLNQAFRLLLDGAPLIAIHKARYYKRKDGLALGPGPFVTALEYATDTKAMVVGKPEKTFFLEALRDADCAPEEAVMIGDDCRDDVDGAQNIGMLGILVKTGKYKAADEEKINPPPYLTCESFPHAVDHILQHLL.

Mg(2+) is bound by residues Asp13 and Asn15. Substrate-binding positions include 13–15 (DLN) and 46–47 (TN). A coiled-coil region spans residues 47–72 (NTTKESKKDLLERLKKLEFEISEDEI). Lys50 carries the post-translational modification N6-succinyllysine. Lys179 serves as a coordination point for substrate. Asp204 serves as a coordination point for Mg(2+).

This sequence belongs to the HAD-like hydrolase superfamily. Mg(2+) serves as cofactor.

In Mus musculus (Mouse), this protein is Haloacid dehalogenase-like hydrolase domain-containing protein 2 (Hdhd2).